Reading from the N-terminus, the 346-residue chain is Ribosomal RNA small subunit methyltransferase H (346 aa).

S-adenosyl-L-methionine is bound by residues 47-49 (GGY), D65, F92, D113, and Q120. The tract at residues 294–346 (AVEPGSDEVAGNPRARSAKLRAAERTDAPAHPDGDLAGLLPADLSQRRGRRRS) is disordered. Positions 314–327 (RAAERTDAPAHPDG) are enriched in basic and acidic residues. Over residues 328–337 (DLAGLLPADL) the composition is skewed to low complexity.

The protein belongs to the methyltransferase superfamily. RsmH family.

Its subcellular location is the cytoplasm. It catalyses the reaction cytidine(1402) in 16S rRNA + S-adenosyl-L-methionine = N(4)-methylcytidine(1402) in 16S rRNA + S-adenosyl-L-homocysteine + H(+). Its function is as follows. Specifically methylates the N4 position of cytidine in position 1402 (C1402) of 16S rRNA. In Azorhizobium caulinodans (strain ATCC 43989 / DSM 5975 / JCM 20966 / LMG 6465 / NBRC 14845 / NCIMB 13405 / ORS 571), this protein is Ribosomal RNA small subunit methyltransferase H.